The following is a 1032-amino-acid chain: Phosphoenolpyruvate carboxylase 4 (1032 aa).

His154 is an active-site residue. The segment at 377-407 (PNLQKQNEQDFSESDWEKIDNGSRSGLTSRG) is disordered. The segment covering 398–407 (GSRSGLTSRG) has biased composition (polar residues). The active site involves Lys699.

Belongs to the PEPCase type 1 family. Homotetramer. It depends on Mg(2+) as a cofactor. In terms of tissue distribution, expressed at low levels in flowers and siliques, and detectable in roots.

It is found in the cytoplasm. It carries out the reaction oxaloacetate + phosphate = phosphoenolpyruvate + hydrogencarbonate. Through the carboxylation of phosphoenolpyruvate (PEP) it forms oxaloacetate, a four-carbon dicarboxylic acid source for the tricarboxylic acid cycle. The protein is Phosphoenolpyruvate carboxylase 4 (PPC4) of Arabidopsis thaliana (Mouse-ear cress).